A 151-amino-acid chain; its full sequence is UPF0756 membrane protein GTNG_2661 (151 aa).

4 consecutive transmembrane segments (helical) span residues 5–25, 53–73, 86–106, and 116–136; these read VLFL…SLII, WGVT…EIGF, WIAL…VMLL, and LVLG…GPLI.

It belongs to the UPF0756 family.

It localises to the cell membrane. The sequence is that of UPF0756 membrane protein GTNG_2661 from Geobacillus thermodenitrificans (strain NG80-2).